The primary structure comprises 37 residues: Large ribosomal subunit protein bL36c (37 aa).

This sequence belongs to the bacterial ribosomal protein bL36 family.

It is found in the plastid. The protein is Large ribosomal subunit protein bL36c of Cuscuta exaltata (Tall dodder).